A 118-amino-acid chain; its full sequence is NADH-quinone oxidoreductase subunit A 2 (118 aa).

A run of 3 helical transmembrane segments spans residues 5–25 (YLPI…SVIF), 62–82 (LIAM…PWAV), and 87–107 (LGMF…VGYV).

The protein belongs to the complex I subunit 3 family. As to quaternary structure, NDH-1 is composed of 14 different subunits. Subunits NuoA, H, J, K, L, M, N constitute the membrane sector of the complex.

It is found in the cell inner membrane. The catalysed reaction is a quinone + NADH + 5 H(+)(in) = a quinol + NAD(+) + 4 H(+)(out). In terms of biological role, NDH-1 shuttles electrons from NADH, via FMN and iron-sulfur (Fe-S) centers, to quinones in the respiratory chain. The immediate electron acceptor for the enzyme in this species is believed to be ubiquinone. Couples the redox reaction to proton translocation (for every two electrons transferred, four hydrogen ions are translocated across the cytoplasmic membrane), and thus conserves the redox energy in a proton gradient. The sequence is that of NADH-quinone oxidoreductase subunit A 2 from Citrifermentans bemidjiense (strain ATCC BAA-1014 / DSM 16622 / JCM 12645 / Bem) (Geobacter bemidjiensis).